A 670-amino-acid chain; its full sequence is tRNA 5-methylaminomethyl-2-thiouridine biosynthesis bifunctional protein MnmC (670 aa).

A tRNA (mnm(5)s(2)U34)-methyltransferase region spans residues 1-242; the sequence is MTFSVQHAEI…KRECLSGLKI (242 aa). Residues 269-670 are FAD-dependent cmnm(5)s(2)U34 oxidoreductase; that stretch reads IGGGIASFCA…KKWLKGSKVE (402 aa).

It in the N-terminal section; belongs to the methyltransferase superfamily. tRNA (mnm(5)s(2)U34)-methyltransferase family. The protein in the C-terminal section; belongs to the DAO family. It depends on FAD as a cofactor.

It is found in the cytoplasm. The catalysed reaction is 5-aminomethyl-2-thiouridine(34) in tRNA + S-adenosyl-L-methionine = 5-methylaminomethyl-2-thiouridine(34) in tRNA + S-adenosyl-L-homocysteine + H(+). In terms of biological role, catalyzes the last two steps in the biosynthesis of 5-methylaminomethyl-2-thiouridine (mnm(5)s(2)U) at the wobble position (U34) in tRNA. Catalyzes the FAD-dependent demodification of cmnm(5)s(2)U34 to nm(5)s(2)U34, followed by the transfer of a methyl group from S-adenosyl-L-methionine to nm(5)s(2)U34, to form mnm(5)s(2)U34. The polypeptide is tRNA 5-methylaminomethyl-2-thiouridine biosynthesis bifunctional protein MnmC (Haemophilus influenzae (strain 86-028NP)).